The sequence spans 147 residues: uncharacterized protein (147 aa).

This is an uncharacterized protein from Mycoplasma pneumoniae (strain ATCC 29342 / M129 / Subtype 1) (Mycoplasmoides pneumoniae).